The chain runs to 183 residues: Adenine phosphoribosyltransferase (183 aa).

It belongs to the purine/pyrimidine phosphoribosyltransferase family. As to quaternary structure, homodimer.

The protein resides in the cytoplasm. It catalyses the reaction AMP + diphosphate = 5-phospho-alpha-D-ribose 1-diphosphate + adenine. Its pathway is purine metabolism; AMP biosynthesis via salvage pathway; AMP from adenine: step 1/1. Functionally, catalyzes a salvage reaction resulting in the formation of AMP, that is energically less costly than de novo synthesis. The polypeptide is Adenine phosphoribosyltransferase (Escherichia coli O157:H7).